A 352-amino-acid chain; its full sequence is Nodal homolog 4-B (352 aa).

Positions Met1 to Ser18 are cleaved as a signal peptide. The propeptide occupies Leu19–Arg278. 4 N-linked (GlcNAc...) asparagine glycosylation sites follow: Asn30, Asn37, Asn199, and Asn238. The disordered stretch occupies residues Gly197 to Gln223.

The protein belongs to the TGF-beta family. As to quaternary structure, homodimer; disulfide-linked.

The protein resides in the secreted. Functionally, cooperation and regulatory loops of multiple nodals are essential for mesendoderm patterning in early embryos. Plays a role in mesoderm formation and may be required for neural development. This chain is Nodal homolog 4-B (nodal4-b), found in Xenopus laevis (African clawed frog).